The following is a 314-amino-acid chain: Acetyl-coenzyme A carboxylase carboxyl transferase subunit alpha (314 aa).

Residues 32 to 289 (EIDMLEASLE…KSAFVAQLDS (258 aa)) enclose the CoA carboxyltransferase C-terminal domain.

The protein belongs to the AccA family. In terms of assembly, acetyl-CoA carboxylase is a heterohexamer composed of biotin carboxyl carrier protein (AccB), biotin carboxylase (AccC) and two subunits each of ACCase subunit alpha (AccA) and ACCase subunit beta (AccD).

Its subcellular location is the cytoplasm. It catalyses the reaction N(6)-carboxybiotinyl-L-lysyl-[protein] + acetyl-CoA = N(6)-biotinyl-L-lysyl-[protein] + malonyl-CoA. It participates in lipid metabolism; malonyl-CoA biosynthesis; malonyl-CoA from acetyl-CoA: step 1/1. Its function is as follows. Component of the acetyl coenzyme A carboxylase (ACC) complex. First, biotin carboxylase catalyzes the carboxylation of biotin on its carrier protein (BCCP) and then the CO(2) group is transferred by the carboxyltransferase to acetyl-CoA to form malonyl-CoA. The chain is Acetyl-coenzyme A carboxylase carboxyl transferase subunit alpha from Staphylococcus aureus (strain JH9).